We begin with the raw amino-acid sequence, 1578 residues long: Cilia- and flagella-associated protein 74 (1578 aa).

The span at 1-14 (MEEPTVQFSDEDLV) shows a compositional bias: acidic residues. Disordered regions lie at residues 1–21 (MEEP…PPMD) and 33–67 (EVER…TTKD). Residues 33–65 (EVERPSEGLEDEGSHSSAKKESKGAEKMRKSTT) are compositionally biased toward basic and acidic residues. Coiled-coil stretches lie at residues 103–156 (RQRM…QSKI) and 330–378 (KYLF…RRQH).

It belongs to the CFAP74 family.

It is found in the cytoplasm. The protein localises to the cytoskeleton. Its subcellular location is the cilium axoneme. It localises to the flagellum axoneme. Its function is as follows. As part of the central apparatus of the cilium axoneme may play a role in cilium movement. May play an important role in sperm architecture and function. The sequence is that of Cilia- and flagella-associated protein 74 from Mus musculus (Mouse).